Reading from the N-terminus, the 379-residue chain is ATP-sensitive inward rectifier potassium channel 10 (379 aa).

Residues 1–61 are Cytoplasmic-facing; sequence MTSVAKVYYS…LKDLWTTFID (61 aa). Residue Arg-36 participates in 1,2-dioctanoyl-sn-glycero-3-phospho-(1D-myo-inositol-4,5-bisphosphate) binding. Residues 62-88 traverse the membrane as a helical segment; that stretch reads MQWRYKLLLFSATFAGTWFLFGVVWYL. At 89–114 the chain is on the extracellular side; the sequence is VAVAHGDLLELGPPANHTPCVVQVHT. Cys-108 and Cys-140 are joined by a disulfide. An intramembrane region (discontinuously helical; Pore-forming) is located at residues 115-131; sequence LTGAFLFSLESQTTIGY. Positions 128–133 match the Selectivity filter motif; that stretch reads TIGYGF. The Extracellular segment spans residues 132 to 140; the sequence is GFRYISEEC. Residues 141-166 traverse the membrane as a helical segment; the sequence is PLAIVLLIAQLVLTTILEIFITGTFL. The Cytoplasmic segment spans residues 167-379; sequence AKIARPKKRA…SALSVRISNV (213 aa). Positions 168, 171, and 173 each coordinate 1,2-dioctanoyl-sn-glycero-3-phospho-(1D-myo-inositol-4,5-bisphosphate). 210 to 217 is a binding site for ATP; it reads GCQVTGKL.

Belongs to the inward rectifier-type potassium channel (TC 1.A.2.1) family. KCNJ10 subfamily. As to quaternary structure, homotetramer. In kidney cells, it forms heteromeric channels with Kir5.1/KCNJ16; this interaction is required for KCNJ16 localization to the basolateral membrane. Interacts with MAGI1, alone and possibly as a heteromer with KCNJ16; this interaction may facilitate KCNJ10/KCNJ16 potassium channel expression at the basolateral membrane in kidney cells. Interacts with PATJ. In terms of tissue distribution, widely expressed in adult brain, including in the neocortex, the stratum pyrimadale of the hippocampus and the piriform cortex. Expressed by cultured astrocytes and also by cocultured cortical neurons (at protein level). In the distal segment of the nephron, expressed in the distal convoluted tubule, the connecting tubule, and the early cortical collecting duct.

The protein localises to the membrane. It localises to the basolateral cell membrane. It catalyses the reaction K(+)(in) = K(+)(out). Its activity is regulated as follows. Channel activity is strongly regulated by variations of cytosolic pH; channels are activated by alkaline and inhibited by acidic pH values. Activated by phosphatidylinositol 4,5 biphosphate (PtdIns(4,5)P2). Inhibited by Ba(2+) and Cs(+). Its function is as follows. May be responsible for potassium buffering action of glial cells in the brain. Inward rectifier potassium channels are characterized by a greater tendency to allow potassium to flow into the cell rather than out of it. Their voltage dependence is regulated by the concentration of extracellular potassium; as external potassium is raised, the voltage range of the channel opening shifts to more positive voltages. The inward rectification is mainly due to the blockage of outward current by internal magnesium. Can be blocked by extracellular barium and cesium. In the kidney, together with KCNJ16, mediates basolateral K(+) recycling in distal tubules; this process is critical for Na(+) reabsorption at the tubules. This is ATP-sensitive inward rectifier potassium channel 10 from Mus musculus (Mouse).